The following is a 306-amino-acid chain: Pyridoxal 5'-phosphate synthase subunit PdxS (306 aa).

D-ribose 5-phosphate is bound at residue aspartate 36. Lysine 93 acts as the Schiff-base intermediate with D-ribose 5-phosphate in catalysis. A D-ribose 5-phosphate-binding site is contributed by glycine 165. Arginine 177 serves as a coordination point for D-glyceraldehyde 3-phosphate. D-ribose 5-phosphate is bound by residues glycine 226 and 247–248 (GS).

The protein belongs to the PdxS/SNZ family. As to quaternary structure, in the presence of PdxT, forms a dodecamer of heterodimers.

The catalysed reaction is aldehydo-D-ribose 5-phosphate + D-glyceraldehyde 3-phosphate + L-glutamine = pyridoxal 5'-phosphate + L-glutamate + phosphate + 3 H2O + H(+). The protein operates within cofactor biosynthesis; pyridoxal 5'-phosphate biosynthesis. Functionally, catalyzes the formation of pyridoxal 5'-phosphate from ribose 5-phosphate (RBP), glyceraldehyde 3-phosphate (G3P) and ammonia. The ammonia is provided by the PdxT subunit. Can also use ribulose 5-phosphate and dihydroxyacetone phosphate as substrates, resulting from enzyme-catalyzed isomerization of RBP and G3P, respectively. The sequence is that of Pyridoxal 5'-phosphate synthase subunit PdxS from Nocardia farcinica (strain IFM 10152).